The chain runs to 443 residues: Ribosomal protein uS12 methylthiotransferase RimO (443 aa).

The MTTase N-terminal domain maps to 8 to 118 (PKVGFVSLGC…VVNAVHEVVP (111 aa)). [4Fe-4S] cluster contacts are provided by C17, C53, C82, C151, C155, and C158. The 239-residue stretch at 137 to 375 (LTPRHYAYLK…MAHQQAISTA (239 aa)) folds into the Radical SAM core domain. The TRAM domain occupies 378-443 (QLRIGKEIEV…DEYDMWAEPI (66 aa)).

The protein belongs to the methylthiotransferase family. RimO subfamily. [4Fe-4S] cluster serves as cofactor.

It localises to the cytoplasm. The catalysed reaction is L-aspartate(89)-[ribosomal protein uS12]-hydrogen + (sulfur carrier)-SH + AH2 + 2 S-adenosyl-L-methionine = 3-methylsulfanyl-L-aspartate(89)-[ribosomal protein uS12]-hydrogen + (sulfur carrier)-H + 5'-deoxyadenosine + L-methionine + A + S-adenosyl-L-homocysteine + 2 H(+). Its function is as follows. Catalyzes the methylthiolation of an aspartic acid residue of ribosomal protein uS12. In Pseudomonas putida (strain GB-1), this protein is Ribosomal protein uS12 methylthiotransferase RimO.